Here is a 63-residue protein sequence, read N- to C-terminus: Small ribosomal subunit protein eS30 (63 aa).

The disordered stretch occupies residues 1–33 (MGKVHGSLARAGKVKSQTPKVEKQEKPKKPQGR).

The protein belongs to the eukaryotic ribosomal protein eS30 family. In terms of assembly, component of the small ribosomal subunit. Mature ribosomes consist of a small (40S) and a large (60S) subunit. The 40S subunit contains about 32 different proteins and 1 molecule of RNA (18S). The 60S subunit contains 45 different proteins and 3 molecules of RNA (25S, 5.8S and 5S).

It localises to the cytoplasm. Its function is as follows. Component of the ribosome, a large ribonucleoprotein complex responsible for the synthesis of proteins in the cell. The small ribosomal subunit (SSU) binds messenger RNAs (mRNAs) and translates the encoded message by selecting cognate aminoacyl-transfer RNA (tRNA) molecules. The large subunit (LSU) contains the ribosomal catalytic site termed the peptidyl transferase center (PTC), which catalyzes the formation of peptide bonds, thereby polymerizing the amino acids delivered by tRNAs into a polypeptide chain. The nascent polypeptides leave the ribosome through a tunnel in the LSU and interact with protein factors that function in enzymatic processing, targeting, and the membrane insertion of nascent chains at the exit of the ribosomal tunnel. This Candida albicans (strain SC5314 / ATCC MYA-2876) (Yeast) protein is Small ribosomal subunit protein eS30 (RPS30).